A 220-amino-acid polypeptide reads, in one-letter code: Nucleoside diphosphate kinase, mitochondrial (220 aa).

The N-terminal 57 residues, 1-57, are a transit peptide targeting the mitochondrion; that stretch reads MFSRFARAFPKILASGASQRTFATVQKAFANPTSKKLIVGSSLLIGSAFATTSFVAC. ATP is bound by residues Lys-80, Phe-128, Arg-156, Thr-162, Arg-173, and Asn-183. Residue His-186 is the Pros-phosphohistidine intermediate of the active site.

The protein belongs to the NDK family. Mg(2+) serves as cofactor.

The protein localises to the mitochondrion intermembrane space. The catalysed reaction is a 2'-deoxyribonucleoside 5'-diphosphate + ATP = a 2'-deoxyribonucleoside 5'-triphosphate + ADP. It carries out the reaction a ribonucleoside 5'-diphosphate + ATP = a ribonucleoside 5'-triphosphate + ADP. In terms of biological role, major role in the synthesis of nucleoside triphosphates other than ATP. The ATP gamma phosphate is transferred to the NDP beta phosphate via a ping-pong mechanism, using a phosphorylated active-site intermediate. This Dictyostelium discoideum (Social amoeba) protein is Nucleoside diphosphate kinase, mitochondrial (ndkM).